The following is a 370-amino-acid chain: DNA primase small subunit PriS (370 aa).

Active-site residues include Asp-92, Asp-94, and Asp-272.

The protein belongs to the eukaryotic-type primase small subunit family. As to quaternary structure, heterodimer of a small subunit (PriS) and a large subunit (PriL). Mg(2+) is required as a cofactor. It depends on Mn(2+) as a cofactor.

Functionally, catalytic subunit of DNA primase, an RNA polymerase that catalyzes the synthesis of short RNA molecules used as primers for DNA polymerase during DNA replication. The small subunit contains the primase catalytic core and has DNA synthesis activity on its own. Binding to the large subunit stabilizes and modulates the activity, increasing the rate of DNA synthesis while decreasing the length of the DNA fragments, and conferring RNA synthesis capability. The DNA polymerase activity may enable DNA primase to also catalyze primer extension after primer synthesis. May also play a role in DNA repair. This Picrophilus torridus (strain ATCC 700027 / DSM 9790 / JCM 10055 / NBRC 100828 / KAW 2/3) protein is DNA primase small subunit PriS.